We begin with the raw amino-acid sequence, 233 residues long: MNNAPVIHCEKLSKTYVEGKLRVPVLHEVEFSVAPGERIAIVGASGAGKSTFLQLLGGLDKPSNGKIWVNGNDINQLSEREKGLLRNQHLGFVYQFHHLLPEFNALENVCIPLLVRGGIKPKHARQKASAYLEKVGLSHRQKHRVGELSGGEKQRVALARALVTEPCCVLADEPTGNLDQKTAEQVADLTLQLNRSLNISFVIVTHNREFADKMDRVLLLDKGQLQSESERNH.

Residues 7–233 enclose the ABC transporter domain; the sequence is IHCEKLSKTY…QLQSESERNH (227 aa). 43-50 lines the ATP pocket; that stretch reads GASGAGKS.

It belongs to the ABC transporter superfamily. Lipoprotein translocase (TC 3.A.1.125) family. As to quaternary structure, the complex is composed of two ATP-binding proteins (LolD) and two transmembrane proteins (LolC and LolE).

It localises to the cell inner membrane. Its function is as follows. Part of the ABC transporter complex LolCDE involved in the translocation of mature outer membrane-directed lipoproteins, from the inner membrane to the periplasmic chaperone, LolA. Responsible for the formation of the LolA-lipoprotein complex in an ATP-dependent manner. The protein is Lipoprotein-releasing system ATP-binding protein LolD of Coxiella burnetii (strain RSA 493 / Nine Mile phase I).